The following is a 371-amino-acid chain: SufE-like protein 1, chloroplastic/mitochondrial (371 aa).

A chloroplast and mitochondrion-targeting transit peptide spans 1 to 66 (MAAAMSSSCC…ISTGIVPPPS (66 aa)). The active-site Cysteine persulfide intermediate is Cys-131. Cys-131 is modified (S-glutathionyl cysteine). Residues 218–249 (VKGEEDSSSGESSESSFVSIPETKDEANVPEV) are disordered.

This sequence belongs to the SufE family. In terms of assembly, heterotetramer with NFS2. Interacts with NFS2 and NIFS1. Interacts in vitro with GRXS14, GRXS15, GRXS16 and GRXS17, but not with GRXC5. Interacts in vivo only with GRXS14 and GRXS16. In terms of processing, glutathionylated. Glutathionylation strongly reduces the stimulation of NFS2 activity. As to expression, expressed in roots, leaves, stems and flowers.

It is found in the plastid. Its subcellular location is the chloroplast stroma. It localises to the mitochondrion. It functions in the pathway cofactor biosynthesis; iron-sulfur cluster biosynthesis. Functionally, participates in cysteine desulfurization mediated by NFS2 in chloroplast and NIFS1 in mitochondrion. Activates the cysteine desulfurase activity of NFS2. Cysteine desulfurization mobilizes sulfur from L-cysteine to yield L-alanine and supplies the inorganic sulfur for iron-sulfur (Fe-S) cluster formation. Glutaredoxins regulate SUFE1 activity by inducing its reduction and deglutathionylation. In Arabidopsis thaliana (Mouse-ear cress), this protein is SufE-like protein 1, chloroplastic/mitochondrial.